A 198-amino-acid chain; its full sequence is Protein GrpE (198 aa).

Residues 1–21 (MMKKAEDPLQDREGTIQEHTE) are compositionally biased toward basic and acidic residues. A disordered region spans residues 1–56 (MMKKAEDPLQDREGTIQEHTEGQAGTAAADQSAAVETPESRIAGLEREVQAEKEQN). The segment covering 22-34 (GQAGTAAADQSAA) has biased composition (low complexity). The span at 44 to 56 (GLEREVQAEKEQN) shows a compositional bias: basic and acidic residues.

The protein belongs to the GrpE family. As to quaternary structure, homodimer.

It localises to the cytoplasm. Its function is as follows. Participates actively in the response to hyperosmotic and heat shock by preventing the aggregation of stress-denatured proteins, in association with DnaK and GrpE. It is the nucleotide exchange factor for DnaK and may function as a thermosensor. Unfolded proteins bind initially to DnaJ; upon interaction with the DnaJ-bound protein, DnaK hydrolyzes its bound ATP, resulting in the formation of a stable complex. GrpE releases ADP from DnaK; ATP binding to DnaK triggers the release of the substrate protein, thus completing the reaction cycle. Several rounds of ATP-dependent interactions between DnaJ, DnaK and GrpE are required for fully efficient folding. In Chlorobium luteolum (strain DSM 273 / BCRC 81028 / 2530) (Pelodictyon luteolum), this protein is Protein GrpE.